The following is a 430-amino-acid chain: UDP-N-acetylglucosamine 1-carboxyvinyltransferase (430 aa).

22 to 23 lines the phosphoenolpyruvate pocket; it reads KN. R102 is a binding site for UDP-N-acetyl-alpha-D-glucosamine. C126 (proton donor) is an active-site residue. Residue C126 is modified to 2-(S-cysteinyl)pyruvic acid O-phosphothioketal. UDP-N-acetyl-alpha-D-glucosamine contacts are provided by residues 131 to 135, 172 to 175, D317, and I339; these read RPVDL and KVSV.

This sequence belongs to the EPSP synthase family. MurA subfamily.

The protein resides in the cytoplasm. It carries out the reaction phosphoenolpyruvate + UDP-N-acetyl-alpha-D-glucosamine = UDP-N-acetyl-3-O-(1-carboxyvinyl)-alpha-D-glucosamine + phosphate. Its pathway is cell wall biogenesis; peptidoglycan biosynthesis. Its function is as follows. Cell wall formation. Adds enolpyruvyl to UDP-N-acetylglucosamine. This Sinorhizobium medicae (strain WSM419) (Ensifer medicae) protein is UDP-N-acetylglucosamine 1-carboxyvinyltransferase.